Reading from the N-terminus, the 394-residue chain is Elongation factor Tu (394 aa).

A tr-type G domain is found at 10-204; the sequence is KPHVNVGTIG…ALDSYIPEPQ (195 aa). The segment at 19 to 26 is G1; it reads GHVDHGKT. 19 to 26 contributes to the GTP binding site; the sequence is GHVDHGKT. T26 contacts Mg(2+). Residues 60–64 form a G2 region; it reads GITIN. Positions 81–84 are G3; it reads DCPG. GTP contacts are provided by residues 81-85 and 136-139; these read DCPGH and NKCD. The segment at 136 to 139 is G4; that stretch reads NKCD. Positions 174-176 are G5; that stretch reads SAL.

Belongs to the TRAFAC class translation factor GTPase superfamily. Classic translation factor GTPase family. EF-Tu/EF-1A subfamily. As to quaternary structure, monomer.

It is found in the cytoplasm. The enzyme catalyses GTP + H2O = GDP + phosphate + H(+). Its function is as follows. GTP hydrolase that promotes the GTP-dependent binding of aminoacyl-tRNA to the A-site of ribosomes during protein biosynthesis. In Shewanella putrefaciens (Pseudomonas putrefaciens), this protein is Elongation factor Tu.